The primary structure comprises 409 residues: Phosphatidylserine decarboxylase proenzyme, mitochondrial (409 aa).

Residues 1-52 constitute a mitochondrion transit peptide; it reads MATSVGHRCLGLLHGVAPWRSSLHPCEITALSQSLQPLRKLPFRAFRTDARK. The necessary for localization to both lipid droplets and mitochondria stretch occupies residues 36 to 103; it reads QPLRKLPFRA…LGLEIPPKLA (68 aa). The Mitochondrial matrix portion of the chain corresponds to 53-63; the sequence is IHTAPARTMFL. The chain crosses the membrane as a helical span at residues 64–82; it reads LRPLPILLVTGGGYAGYRQ. Residues 83–409 are Mitochondrial intermembrane-facing; that stretch reads YEKYRERELE…IRFGEALGSL (327 aa). Residues Asp-191, His-267, and Ser-378 each act as charge relay system; for autoendoproteolytic cleavage activity in the active site. The active-site Schiff-base intermediate with substrate; via pyruvic acid; for decarboxylase activity is Ser-378. At Ser-378 the chain carries Pyruvic acid (Ser); by autocatalysis.

Belongs to the phosphatidylserine decarboxylase family. PSD-B subfamily. Eukaryotic type I sub-subfamily. As to quaternary structure, heterodimer of a large membrane-associated beta subunit and a small pyruvoyl-containing alpha subunit. Requires pyruvate as cofactor. In terms of processing, is synthesized initially as an inactive proenzyme. Formation of the active enzyme involves a self-maturation process in which the active site pyruvoyl group is generated from an internal serine residue via an autocatalytic post-translational modification. Two non-identical subunits are generated from the proenzyme in this reaction, and the pyruvate is formed at the N-terminus of the alpha chain, which is derived from the carboxyl end of the proenzyme. The autoendoproteolytic cleavage occurs by a canonical serine protease mechanism, in which the side chain hydroxyl group of the serine supplies its oxygen atom to form the C-terminus of the beta chain, while the remainder of the serine residue undergoes an oxidative deamination to produce ammonia and the pyruvoyl prosthetic group on the alpha chain. During this reaction, the Ser that is part of the protease active site of the proenzyme becomes the pyruvoyl prosthetic group, which constitutes an essential element of the active site of the mature decarboxylase.

It localises to the mitochondrion inner membrane. The protein localises to the cytoplasm. Its subcellular location is the lipid droplet. It catalyses the reaction a 1,2-diacyl-sn-glycero-3-phospho-L-serine + H(+) = a 1,2-diacyl-sn-glycero-3-phosphoethanolamine + CO2. The protein operates within phospholipid metabolism; phosphatidylethanolamine biosynthesis. In terms of biological role, catalyzes the formation of phosphatidylethanolamine (PtdEtn) from phosphatidylserine (PtdSer). Plays a central role in phospholipid metabolism and in the interorganelle trafficking of phosphatidylserine. May be involved in lipid droplet biogenesis at the endoplasmic reticulum membrane. This chain is Phosphatidylserine decarboxylase proenzyme, mitochondrial, found in Homo sapiens (Human).